Reading from the N-terminus, the 813-residue chain is Leucine--tRNA ligase (813 aa).

Positions 42–52 (PYTSGNLHIGH) match the 'HIGH' region motif. The 'KMSKS' region motif lies at 580-584 (KMSKS). Lysine 583 lines the ATP pocket.

It belongs to the class-I aminoacyl-tRNA synthetase family.

Its subcellular location is the cytoplasm. It catalyses the reaction tRNA(Leu) + L-leucine + ATP = L-leucyl-tRNA(Leu) + AMP + diphosphate. This chain is Leucine--tRNA ligase, found in Dehalococcoides mccartyi (strain ATCC BAA-2266 / KCTC 15142 / 195) (Dehalococcoides ethenogenes (strain 195)).